The following is an 87-amino-acid chain: uncharacterized protein (87 aa).

This sequence belongs to the SF3B5 family.

This is an uncharacterized protein from Arabidopsis thaliana (Mouse-ear cress).